Consider the following 209-residue polypeptide: Large ribosomal subunit protein uL3 (209 aa).

Positions 117 to 142 (FQGPIKRHGQSRGPETHGSRYHRRPG) are disordered.

It belongs to the universal ribosomal protein uL3 family. Part of the 50S ribosomal subunit. Forms a cluster with proteins L14 and L19.

In terms of biological role, one of the primary rRNA binding proteins, it binds directly near the 3'-end of the 23S rRNA, where it nucleates assembly of the 50S subunit. The chain is Large ribosomal subunit protein uL3 from Clostridioides difficile (strain 630) (Peptoclostridium difficile).